The primary structure comprises 251 residues: Ubiquinone/menaquinone biosynthesis C-methyltransferase UbiE (251 aa).

Residues threonine 74, aspartate 95, 123 to 124 (NA), and serine 140 contribute to the S-adenosyl-L-methionine site.

This sequence belongs to the class I-like SAM-binding methyltransferase superfamily. MenG/UbiE family.

It carries out the reaction a 2-demethylmenaquinol + S-adenosyl-L-methionine = a menaquinol + S-adenosyl-L-homocysteine + H(+). The enzyme catalyses a 2-methoxy-6-(all-trans-polyprenyl)benzene-1,4-diol + S-adenosyl-L-methionine = a 5-methoxy-2-methyl-3-(all-trans-polyprenyl)benzene-1,4-diol + S-adenosyl-L-homocysteine + H(+). It functions in the pathway quinol/quinone metabolism; menaquinone biosynthesis; menaquinol from 1,4-dihydroxy-2-naphthoate: step 2/2. The protein operates within cofactor biosynthesis; ubiquinone biosynthesis. Functionally, methyltransferase required for the conversion of demethylmenaquinol (DMKH2) to menaquinol (MKH2) and the conversion of 2-polyprenyl-6-methoxy-1,4-benzoquinol (DDMQH2) to 2-polyprenyl-3-methyl-6-methoxy-1,4-benzoquinol (DMQH2). The chain is Ubiquinone/menaquinone biosynthesis C-methyltransferase UbiE from Pectobacterium carotovorum subsp. carotovorum (strain PC1).